A 136-amino-acid polypeptide reads, in one-letter code: Ribonuclease VapC1 (136 aa).

A PINc domain is found at 18–129 (ILVDTSVLID…KKHFERLKEF (112 aa)). The Mg(2+) site is built by aspartate 21 and aspartate 101.

This sequence belongs to the PINc/VapC protein family. The cofactor is Mg(2+).

Toxic component of a type II toxin-antitoxin (TA) system. An RNase. Its cognate antitoxin is VapB1. The polypeptide is Ribonuclease VapC1 (Methanocaldococcus jannaschii (strain ATCC 43067 / DSM 2661 / JAL-1 / JCM 10045 / NBRC 100440) (Methanococcus jannaschii)).